The sequence spans 198 residues: MEAFHTHTGIGVPLRRSNVDTDQIIPAVYLKRVTRTGFEDGLFASWRSDPSFVLNLSPFDRGSVLVAGPDFGTGSSREHAVWALMDYGFRVVISSRFGDIFRGNAGKAGLLAAEVSQDGVELLWKLIEQSPGLEITANLQDRNITAGTTVLPFKIDDHTAWRLLEGLDDIALTLRKLDRIESYEAAYPDWKPRTSPVA.

This sequence belongs to the LeuD family. LeuD type 1 subfamily. As to quaternary structure, heterodimer of LeuC and LeuD.

It carries out the reaction (2R,3S)-3-isopropylmalate = (2S)-2-isopropylmalate. It participates in amino-acid biosynthesis; L-leucine biosynthesis; L-leucine from 3-methyl-2-oxobutanoate: step 2/4. Functionally, catalyzes the isomerization between 2-isopropylmalate and 3-isopropylmalate, via the formation of 2-isopropylmaleate. This chain is 3-isopropylmalate dehydratase small subunit, found in Mycobacterium avium (strain 104).